A 369-amino-acid chain; its full sequence is Protein-glutamate methylesterase/protein-glutamine glutaminase (369 aa).

A Response regulatory domain is found at 4–121; it reads KVLVVDDSSF…ARNRDEAVSL (118 aa). Asp55 bears the 4-aspartylphosphate mark. Residues 146 to 171 show a composition bias toward low complexity; sequence ATSSARPLASRTAAPAASAPARPATT. The segment at 146–175 is disordered; the sequence is ATSSARPLASRTAAPAASAPARPATTKFRA. A CheB-type methylesterase domain is found at 176-369; that stretch reads SGKKYQLTAI…ERMLVEVGLA (194 aa). Residues Ser188, His215, and Asp311 contribute to the active site.

Belongs to the CheB family. Phosphorylated by CheA. Phosphorylation of the N-terminal regulatory domain activates the methylesterase activity.

The protein resides in the cytoplasm. It carries out the reaction [protein]-L-glutamate 5-O-methyl ester + H2O = L-glutamyl-[protein] + methanol + H(+). It catalyses the reaction L-glutaminyl-[protein] + H2O = L-glutamyl-[protein] + NH4(+). In terms of biological role, involved in chemotaxis. Part of a chemotaxis signal transduction system that modulates chemotaxis in response to various stimuli. Catalyzes the demethylation of specific methylglutamate residues introduced into the chemoreceptors (methyl-accepting chemotaxis proteins or MCP) by CheR. Also mediates the irreversible deamidation of specific glutamine residues to glutamic acid. This Vibrio parahaemolyticus serotype O3:K6 (strain RIMD 2210633) protein is Protein-glutamate methylesterase/protein-glutamine glutaminase.